The sequence spans 886 residues: Adhesion G protein-coupled receptor E1 (886 aa).

The N-terminal stretch at methionine 1–glycine 20 is a signal peptide. Topologically, residues histidine 21–aspartate 599 are extracellular. An EGF-like 1 domain is found at lysine 31–lysine 79. Cystine bridges form between cysteine 35–cysteine 47, cysteine 41–cysteine 56, cysteine 58–cysteine 78, cysteine 84–cysteine 97, cysteine 91–cysteine 106, cysteine 108–cysteine 130, cysteine 136–cysteine 148, cysteine 142–cysteine 157, cysteine 159–cysteine 170, cysteine 176–cysteine 188, cysteine 182–cysteine 197, cysteine 199–cysteine 219, cysteine 225–cysteine 235, cysteine 229–cysteine 244, cysteine 246–cysteine 266, cysteine 272–cysteine 285, cysteine 279–cysteine 294, and cysteine 296–cysteine 315. Residues aspartate 80–threonine 131 enclose the EGF-like 2; calcium-binding domain. Asparagine 94, asparagine 99, and asparagine 127 each carry an N-linked (GlcNAc...) asparagine glycan. The 40-residue stretch at aspartate 132 to glutamate 171 folds into the EGF-like 3; calcium-binding domain. The N-linked (GlcNAc...) asparagine glycan is linked to asparagine 167. The 49-residue stretch at aspartate 172–glutamate 220 folds into the EGF-like 4; calcium-binding domain. Residues asparagine 189 and asparagine 194 are each glycosylated (N-linked (GlcNAc...) asparagine). The EGF-like 5; calcium-binding domain maps to aspartate 221–arginine 267. N-linked (GlcNAc...) asparagine glycans are attached at residues asparagine 232 and asparagine 258. An EGF-like 6; calcium-binding domain is found at aspartate 268–glutamine 316. 4 N-linked (GlcNAc...) asparagine glycosylation sites follow: asparagine 312, asparagine 366, asparagine 375, and asparagine 448. The GAIN-B domain occupies glutamate 431 to threonine 597. 2 disulfide bridges follow: cysteine 550–cysteine 579 and cysteine 567–cysteine 581. The GPS stretch occupies residues cysteine 550–threonine 597. Residues phenylalanine 600–cysteine 627 form a helical membrane-spanning segment. Residues arginine 628 to asparagine 634 are Cytoplasmic-facing. The chain crosses the membrane as a helical span at residues threonine 635–isoleucine 656. Residues histidine 657 to alanine 666 are Extracellular-facing. The chain crosses the membrane as a helical span at residues isoleucine 667–leucine 690. At phenylalanine 691–lysine 709 the chain is on the cytoplasmic side. A helical membrane pass occupies residues methionine 710–valine 731. At glutamine 732–glutamate 747 the chain is on the extracellular side. A helical membrane pass occupies residues threonine 748 to leucine 776. Residues arginine 777–arginine 794 are Cytoplasmic-facing. The chain crosses the membrane as a helical span at residues leucine 795–glycine 814. At isoleucine 815–phenylalanine 829 the chain is on the extracellular side. A helical transmembrane segment spans residues threonine 830 to arginine 852. Over glutamate 853–glycine 886 the chain is Cytoplasmic. The disordered stretch occupies residues lysine 862–glycine 886. Positions threonine 863–glycine 886 are enriched in polar residues.

Belongs to the G-protein coupled receptor 2 family. Adhesion G-protein coupled receptor (ADGR) subfamily. Expression is restricted to eosinophils.

Its subcellular location is the cell membrane. Its function is as follows. Orphan receptor involved in cell adhesion and probably in cell-cell interactions specifically involving cells of the immune system. May play a role in regulatory T-cells (Treg) development. This chain is Adhesion G protein-coupled receptor E1, found in Homo sapiens (Human).